Consider the following 475-residue polypeptide: Equilibrative nucleoside transporter 3 (475 aa).

Residues 1-24 (MAVVSEDDFQHSSNSTYRTTSSSL) form a disordered region. Residues 1–53 (MAVVSEDDFQHSSNSTYRTTSSSLRADQEALLEKLLDRPPPGLQRPEDRFCGT) lie on the Cytoplasmic side of the membrane. Positions 12–23 (SSNSTYRTTSSS) are enriched in low complexity. S21 and S23 each carry phosphoserine. Residues 31 to 32 (LL) carry the Dileucine internalization motif motif. The helical transmembrane segment at 54–74 (YIIFFSLGIGSLLPWNFFITA) threads the bilayer. Residues 75–105 (KEYWMFKLRNSSSPATGEDPEGSDILNYFES) are Extracellular-facing. The N-linked (GlcNAc...) asparagine glycan is linked to N84. A helical membrane pass occupies residues 106–126 (YLAVASTVPSMLCLVANFLLV). The Cytoplasmic portion of the chain corresponds to 127–134 (NRVAVHIR). The helical transmembrane segment at 135–155 (VLASLTVILAIFMVITALVKV) threads the bilayer. The Extracellular portion of the chain corresponds to 156 to 162 (DTSSWTR). A helical transmembrane segment spans residues 163 to 183 (GFFAVTIVCMVILSGASTVFS). Over 184–199 (SSIYGMTGSFPMRNSQ) the chain is Cytoplasmic. Residues 200 to 220 (ALISGGAMGGTVSAVASLVDL) form a helical membrane-spanning segment. Residues 221–230 (AASSDVRNSA) lie on the Extracellular side of the membrane. Residues 231 to 251 (LAFFLTATVFLVLCMGLYLLL) traverse the membrane as a helical segment. Over 252–305 (SRLEYARYYMRPVLAAHVFSGEEELPQDSLSAPSVASRFIDSHTPPLRPILKKT) the chain is Cytoplasmic. The chain crosses the membrane as a helical span at residues 306–326 (ASLGFCVTYVFFITSLIYPAI). The Extracellular segment spans residues 327–337 (CTNIESLNKGS). The helical transmembrane segment at 338 to 358 (GSLWTTKFFIPLTTFLLYNFA) threads the bilayer. Residues 359–377 (DLCGRQLTAWIQVPGPNSK) are Cytoplasmic-facing. Residues 378–398 (ALPGFVLLRTCLIPLFVLCNY) traverse the membrane as a helical segment. At 399–415 (QPRVHLKTVVFQSDVYP) the chain is on the extracellular side. Residues 416–436 (ALLSSLLGLSNGYLSTLALLY) traverse the membrane as a helical segment. Over 437–454 (GPKIVPRELAEATGVVMS) the chain is Cytoplasmic. A helical membrane pass occupies residues 455 to 475 (FYVCLGLTLGSACSTLLVHLI).

This sequence belongs to the SLC29A/ENT transporter (TC 2.A.57) family. Widely expressed in both adult and fetal tissues. Highest levels in placenta, uterus, ovary, spleen, lymph node and bone marrow. Expressed in liver. Lowest levels in brain and heart. Expressed in macrophages.

It is found in the lysosome membrane. It localises to the late endosome membrane. Its subcellular location is the mitochondrion membrane. The protein localises to the cell membrane. It carries out the reaction adenosine(in) = adenosine(out). The catalysed reaction is guanosine(in) = guanosine(out). It catalyses the reaction inosine(in) = inosine(out). The enzyme catalyses uridine(out) = uridine(in). It carries out the reaction cytidine(in) = cytidine(out). The catalysed reaction is thymidine(in) = thymidine(out). It catalyses the reaction 2'-deoxyadenosine(in) = 2'-deoxyadenosine(out). The enzyme catalyses 2'-deoxycytidine(in) = 2'-deoxycytidine(out). It carries out the reaction guanine(out) = guanine(in). The catalysed reaction is uracil(in) = uracil(out). It catalyses the reaction (R)-noradrenaline(out) = (R)-noradrenaline(in). The enzyme catalyses dopamine(out) = dopamine(in). It carries out the reaction serotonin(out) = serotonin(in). The catalysed reaction is tyramine(in) = tyramine(out). It catalyses the reaction ATP(in) = ATP(out). Functionally, uniporter that mediates the facilitative transport of nucleoside across lysosomal and mitochondrial membranes. Functions as a non-electrogenic Na(+)-independent transporter. Substrate transport is pH-dependent and enhanced under acidic condition, probably reflecting the location of the transporter in acidic intracellular compartments. Proton is not a cotransporting ion but most likely change the ionization state of the transporter which dictates transport-permissible/impermissible conformation for nucleoside translocation. May direct the nucleoside transport from lysosomes to cytosol or cytosol to mitochondria to facilitate the fundamental function of salvage synthesis of nucleic acids. Involved in the transport of nucleosides (adenosine, guanosine, uridine, thymidine, cytidine and inosine) and deoxynucleosides (deoxyadenosine, deoxycytidine). Also mediates transport of purine nucleobases (adenine, guanine) and pyrimidine nucleobases (uracil). Also able to transport monoamine neurotransmitters dopamine, serotonin, noradrenaline and tyramine. Capable of transporting ATP. Mediates nucleoside export from lysosomes in macrophages, which regulates macrophage functions and numbers. The protein is Equilibrative nucleoside transporter 3 of Homo sapiens (Human).